The following is a 192-amino-acid chain: MRLNIIDLREIGALTIECEDYLSKLIAVACSLDDLKYNFSLYAKADFEWCNERLINYVIAGYIGQNSSRVKFLNLEFISSGEWLNAIFTSGNKLDVDHILITMTYINKNMPFQNIIEEAEYISGKNTWLDAPTPLKTILDLLDDACLYKYPVKIIVPTVITTDPLAIELLEKYNSLDIEYIRLKSRIEWNSE.

This is an uncharacterized protein from Acanthamoeba polyphaga mimivirus (APMV).